The chain runs to 292 residues: ATP synthase gamma chain (292 aa).

This sequence belongs to the ATPase gamma chain family. F-type ATPases have 2 components, CF(1) - the catalytic core - and CF(0) - the membrane proton channel. CF(1) has five subunits: alpha(3), beta(3), gamma(1), delta(1), epsilon(1). CF(0) has three main subunits: a, b and c.

Its subcellular location is the cell inner membrane. Functionally, produces ATP from ADP in the presence of a proton gradient across the membrane. The gamma chain is believed to be important in regulating ATPase activity and the flow of protons through the CF(0) complex. The protein is ATP synthase gamma chain of Nitrobacter winogradskyi (strain ATCC 25391 / DSM 10237 / CIP 104748 / NCIMB 11846 / Nb-255).